The sequence spans 569 residues: Putative ABC transporter ATP-binding protein TTE1589 (569 aa).

2 consecutive ABC transporter domains span residues 8-248 and 309-542; these read IIVK…IGLM and IQAK…LSLK. Residues 43-50 and 342-349 each bind ATP; these read GPSGAGKS and GHNGSGKT.

The protein belongs to the ABC transporter superfamily.

Its subcellular location is the cell membrane. Functionally, probably part of an ABC transporter complex. Responsible for energy coupling to the transport system. The chain is Putative ABC transporter ATP-binding protein TTE1589 from Caldanaerobacter subterraneus subsp. tengcongensis (strain DSM 15242 / JCM 11007 / NBRC 100824 / MB4) (Thermoanaerobacter tengcongensis).